The primary structure comprises 248 residues: Ubiquinone/menaquinone biosynthesis C-methyltransferase UbiE (248 aa).

Residues Thr-71, Asp-92, and 120 to 121 (DA) contribute to the S-adenosyl-L-methionine site.

Belongs to the class I-like SAM-binding methyltransferase superfamily. MenG/UbiE family.

It catalyses the reaction a 2-demethylmenaquinol + S-adenosyl-L-methionine = a menaquinol + S-adenosyl-L-homocysteine + H(+). It carries out the reaction a 2-methoxy-6-(all-trans-polyprenyl)benzene-1,4-diol + S-adenosyl-L-methionine = a 5-methoxy-2-methyl-3-(all-trans-polyprenyl)benzene-1,4-diol + S-adenosyl-L-homocysteine + H(+). It functions in the pathway quinol/quinone metabolism; menaquinone biosynthesis; menaquinol from 1,4-dihydroxy-2-naphthoate: step 2/2. Its pathway is cofactor biosynthesis; ubiquinone biosynthesis. Its function is as follows. Methyltransferase required for the conversion of demethylmenaquinol (DMKH2) to menaquinol (MKH2) and the conversion of 2-polyprenyl-6-methoxy-1,4-benzoquinol (DDMQH2) to 2-polyprenyl-3-methyl-6-methoxy-1,4-benzoquinol (DMQH2). The sequence is that of Ubiquinone/menaquinone biosynthesis C-methyltransferase UbiE from Methylococcus capsulatus (strain ATCC 33009 / NCIMB 11132 / Bath).